Here is a 340-residue protein sequence, read N- to C-terminus: MTTLNRSELLFVYDAQDCNPNGNPIGDNRPRRDPDTGQGIITDVRLKRYLRDQLQDDGFDIYVKKTEGRSHTRTKLIKDVLGGVDDADDLEDLGDVAEAFLDAATDVRYFGSTLSFEASDKDEDEAFRDALNSSLPNNYQGPVQFLPSKSLNEVEENEEYDSLTSVISTGEGNRQGGFDLDDKRIKYGIFPFWGLVDNNGAESTNLSQADVERLDTLCWRALKNQTTSRSKLGQEPRLYVRVEYEEGNYHVGGLQNLLELGDDSSESLRSVKDVVVDVTELVETLERVADRIDTLHVVGDGRLELDIGDETIRADEFWSHLSEAGHDVHEIDVLNERDLA.

Component of the Cascade-like complex (Cascade I-B), composed of Cas5, Cas6, Cas7 and crRNA.

The protein resides in the cytoplasm. In terms of biological role, CRISPR (clustered regularly interspaced short palindromic repeat) is an adaptive immune system that provides protection against mobile genetic elements (viruses, transposable elements and conjugative plasmids). CRISPR clusters contain sequences complementary to antecedent mobile elements and target invading nucleic acids. CRISPR clusters are transcribed and processed into CRISPR RNA (crRNA). Plasmid targeted by CRISPR locus P1 transform wild-type cells very poorly. This protein helps process or stabilize pre-crRNA into individual crRNA units, in vivo Cas6 and Cas7 are also required for optimal crRNA processing and/or stability. The protein is CRISPR-associated protein Cas7 of Haloferax volcanii (strain ATCC 29605 / DSM 3757 / JCM 8879 / NBRC 14742 / NCIMB 2012 / VKM B-1768 / DS2) (Halobacterium volcanii).